Reading from the N-terminus, the 78-residue chain is Large ribosomal subunit protein bL28 (78 aa).

This sequence belongs to the bacterial ribosomal protein bL28 family.

The chain is Large ribosomal subunit protein bL28 from Prochlorococcus marinus (strain MIT 9312).